The primary structure comprises 125 residues: Small ribosomal subunit protein eS8 (125 aa).

Positions Met1 to Val36 are disordered. Positions Ser7–Gln26 are enriched in basic residues. Residues Leu27–Val36 show a composition bias toward basic and acidic residues.

Belongs to the eukaryotic ribosomal protein eS8 family. Part of the 30S ribosomal subunit.

The protein is Small ribosomal subunit protein eS8 of Haloquadratum walsbyi (strain DSM 16790 / HBSQ001).